Here is a 160-residue protein sequence, read N- to C-terminus: CXXC motif containing zinc binding protein (160 aa).

Zn(2+) contacts are provided by Cys33, Cys36, Cys67, and Cys70. At Ser75 the chain carries Phosphoserine.

The protein belongs to the UPF0587 family. Monomer.

The sequence is that of CXXC motif containing zinc binding protein from Rattus norvegicus (Rat).